Here is a 314-residue protein sequence, read N- to C-terminus: 4-hydroxy-3-methylbut-2-enyl diphosphate reductase (314 aa).

Cys-12 serves as a coordination point for [4Fe-4S] cluster. Positions 41 and 74 each coordinate (2E)-4-hydroxy-3-methylbut-2-enyl diphosphate. Residues His-41 and His-74 each coordinate dimethylallyl diphosphate. Isopentenyl diphosphate contacts are provided by His-41 and His-74. [4Fe-4S] cluster is bound at residue Cys-96. Position 124 (His-124) interacts with (2E)-4-hydroxy-3-methylbut-2-enyl diphosphate. His-124 serves as a coordination point for dimethylallyl diphosphate. His-124 provides a ligand contact to isopentenyl diphosphate. The active-site Proton donor is the Glu-126. Residue Thr-167 participates in (2E)-4-hydroxy-3-methylbut-2-enyl diphosphate binding. Residue Cys-197 participates in [4Fe-4S] cluster binding. Residues Ser-225, Ser-226, Asn-227, and Ser-269 each contribute to the (2E)-4-hydroxy-3-methylbut-2-enyl diphosphate site. 4 residues coordinate dimethylallyl diphosphate: Ser-225, Ser-226, Asn-227, and Ser-269. Residues Ser-225, Ser-226, Asn-227, and Ser-269 each coordinate isopentenyl diphosphate.

Belongs to the IspH family. The cofactor is [4Fe-4S] cluster.

It catalyses the reaction isopentenyl diphosphate + 2 oxidized [2Fe-2S]-[ferredoxin] + H2O = (2E)-4-hydroxy-3-methylbut-2-enyl diphosphate + 2 reduced [2Fe-2S]-[ferredoxin] + 2 H(+). It carries out the reaction dimethylallyl diphosphate + 2 oxidized [2Fe-2S]-[ferredoxin] + H2O = (2E)-4-hydroxy-3-methylbut-2-enyl diphosphate + 2 reduced [2Fe-2S]-[ferredoxin] + 2 H(+). Its pathway is isoprenoid biosynthesis; dimethylallyl diphosphate biosynthesis; dimethylallyl diphosphate from (2E)-4-hydroxy-3-methylbutenyl diphosphate: step 1/1. The protein operates within isoprenoid biosynthesis; isopentenyl diphosphate biosynthesis via DXP pathway; isopentenyl diphosphate from 1-deoxy-D-xylulose 5-phosphate: step 6/6. Functionally, catalyzes the conversion of 1-hydroxy-2-methyl-2-(E)-butenyl 4-diphosphate (HMBPP) into a mixture of isopentenyl diphosphate (IPP) and dimethylallyl diphosphate (DMAPP). Acts in the terminal step of the DOXP/MEP pathway for isoprenoid precursor biosynthesis. The chain is 4-hydroxy-3-methylbut-2-enyl diphosphate reductase from Haemophilus influenzae (strain 86-028NP).